We begin with the raw amino-acid sequence, 515 residues long: Na(+)/H(+) antiporter NhaB (515 aa).

Helical transmembrane passes span 23-43 (LAII…NPFV), 45-65 (GWLL…CYPL), 96-116 (VVLL…LLLF), 136-156 (CLAS…AVVI), 204-224 (LMMH…VGEP), 245-265 (APIT…VEHF), 305-325 (ALIG…VGLI), 349-369 (FEEA…VAVI), 393-413 (LFYL…VGTV), 449-469 (ATPN…SPLI), and 480-500 (ALPY…FLLI).

It belongs to the NhaB Na(+)/H(+) (TC 2.A.34) antiporter family.

It localises to the cell inner membrane. It carries out the reaction 2 Na(+)(in) + 3 H(+)(out) = 2 Na(+)(out) + 3 H(+)(in). Na(+)/H(+) antiporter that extrudes sodium in exchange for external protons. The protein is Na(+)/H(+) antiporter NhaB of Photorhabdus laumondii subsp. laumondii (strain DSM 15139 / CIP 105565 / TT01) (Photorhabdus luminescens subsp. laumondii).